Here is a 63-residue protein sequence, read N- to C-terminus: Large ribosomal subunit protein bL35 (63 aa).

It belongs to the bacterial ribosomal protein bL35 family.

This chain is Large ribosomal subunit protein bL35, found in Campylobacter jejuni subsp. jejuni serotype O:2 (strain ATCC 700819 / NCTC 11168).